The sequence spans 274 residues: Putative phosphoenolpyruvate synthase regulatory protein (274 aa).

155-162 (GVSRSGKT) is an ADP binding site.

Belongs to the pyruvate, phosphate/water dikinase regulatory protein family. PSRP subfamily.

It catalyses the reaction [pyruvate, water dikinase] + ADP = [pyruvate, water dikinase]-phosphate + AMP + H(+). It carries out the reaction [pyruvate, water dikinase]-phosphate + phosphate + H(+) = [pyruvate, water dikinase] + diphosphate. Functionally, bifunctional serine/threonine kinase and phosphorylase involved in the regulation of the phosphoenolpyruvate synthase (PEPS) by catalyzing its phosphorylation/dephosphorylation. The sequence is that of Putative phosphoenolpyruvate synthase regulatory protein from Laribacter hongkongensis (strain HLHK9).